We begin with the raw amino-acid sequence, 212 residues long: uncharacterized protein (212 aa).

Positions 1–18 are cleaved as a signal peptide; it reads MQLTQVLAVAILAAGVSA. Residues 108-180 form a disordered region; that stretch reads VSHNRVNAKQ…KDYGHKDYGH (73 aa). The span at 117–180 shows a compositional bias: basic and acidic residues; sequence QRRDDKKDYG…KDYGHKDYGH (64 aa). Residues 120–210 are 15 X 5 AA tandem repeats of K-D-Y-G-H; the sequence is DDKKDYGKND…KDYGYKGYDD (91 aa). Copy 1 of the repeat occupies 123–127; the sequence is KDYGK. The 2; truncated repeat unit spans residues 128-132; the sequence is NDYGK. A run of 3 repeats spans residues 133–137, 138–142, and 143–147. One copy of the 6; truncated repeat lies at 148–152; the sequence is KEYDP. Repeat copies occupy residues 166 to 170, 171 to 175, 176 to 180, 181 to 185, and 186 to 190. A 12; truncated repeat occupies 191-195; the sequence is DDYGY. Residues 196–200 form a 13; truncated repeat; sequence KGYDD. One copy of the 14; truncated repeat lies at 201 to 205; that stretch reads KDYGY. The stretch at 206–210 is one 15; truncated repeat; that stretch reads KGYDD.

The protein resides in the secreted. This is an uncharacterized protein from Arthroderma benhamiae (strain ATCC MYA-4681 / CBS 112371) (Trichophyton mentagrophytes).